A 180-amino-acid chain; its full sequence is SAGA-associated factor 11 homolog (180 aa).

The segment at 98 to 119 adopts an SGF11-type zinc-finger fold; the sequence is CSCPNCNRIVAASRFAPHLEKC. The disordered stretch occupies residues 138–180; it reads RDGGNYFGADEDDEDDADWSGEKRKKKIAPVRTNGSKKNGKTS. Positions 146–156 are enriched in acidic residues; the sequence is ADEDDEDDADW.

This sequence belongs to the SGF11 family. As to quaternary structure, component of some SAGA transcription coactivator-HAT complexes. Within the SAGA complex, participates in a subcomplex of SAGA called the DUB module (deubiquitination module).

The protein resides in the nucleus. Functionally, component of the transcription regulatory histone acetylation (HAT) complex SAGA, a multiprotein complex that activates transcription by remodeling chromatin and mediating histone acetylation and deubiquitination. Within the SAGA complex, participates in a subcomplex that specifically deubiquitinates histone H2B. The SAGA complex is recruited to specific gene promoters by activators, where it is required for transcription. The chain is SAGA-associated factor 11 homolog from Aedes aegypti (Yellowfever mosquito).